The sequence spans 85 residues: Coiled-coil-helix-coiled-coil-helix domain-containing protein 7 (85 aa).

The region spanning 13–55 (SNPCLEETDASTKCMDDNRYEKDLCTPYFVKYKNCRKFWNGIM) is the CHCH domain. 2 consecutive short sequence motifs (cx9C motif) follow at residues 16 to 26 (CLEETDASTKC) and 37 to 47 (CTPYFVKYKNC). 2 cysteine pairs are disulfide-bonded: C16/C47 and C26/C37.

Belongs to the CHCHD7 family.

Its subcellular location is the mitochondrion intermembrane space. In Xenopus tropicalis (Western clawed frog), this protein is Coiled-coil-helix-coiled-coil-helix domain-containing protein 7 (chchd7).